The sequence spans 409 residues: UDP-N-acetylglucosamine--N-acetylmuramyl-(pentapeptide) pyrophosphoryl-undecaprenol N-acetylglucosamine transferase (409 aa).

Residues 11-13 (TGG), asparagine 125, arginine 169, serine 199, and glutamine 299 each bind UDP-N-acetyl-alpha-D-glucosamine.

Belongs to the glycosyltransferase 28 family. MurG subfamily.

The protein localises to the cell membrane. It catalyses the reaction di-trans,octa-cis-undecaprenyl diphospho-N-acetyl-alpha-D-muramoyl-L-alanyl-D-glutamyl-meso-2,6-diaminopimeloyl-D-alanyl-D-alanine + UDP-N-acetyl-alpha-D-glucosamine = di-trans,octa-cis-undecaprenyl diphospho-[N-acetyl-alpha-D-glucosaminyl-(1-&gt;4)]-N-acetyl-alpha-D-muramoyl-L-alanyl-D-glutamyl-meso-2,6-diaminopimeloyl-D-alanyl-D-alanine + UDP + H(+). It participates in cell wall biogenesis; peptidoglycan biosynthesis. Functionally, cell wall formation. Catalyzes the transfer of a GlcNAc subunit on undecaprenyl-pyrophosphoryl-MurNAc-pentapeptide (lipid intermediate I) to form undecaprenyl-pyrophosphoryl-MurNAc-(pentapeptide)GlcNAc (lipid intermediate II). The chain is UDP-N-acetylglucosamine--N-acetylmuramyl-(pentapeptide) pyrophosphoryl-undecaprenol N-acetylglucosamine transferase from Clostridioides difficile (strain 630) (Peptoclostridium difficile).